A 60-amino-acid chain; its full sequence is Cytochrome c oxidase assembly protein COX14 homolog (60 aa).

The chain crosses the membrane as a helical span at residues 10–32 (VGYRLFSGSMMLLTVYGGYLCVV).

It is found in the mitochondrion membrane. Its function is as follows. Plays a role in the assembly or stability of the cytochrome c oxidase complex (COX). The chain is Cytochrome c oxidase assembly protein COX14 homolog from Danio rerio (Zebrafish).